The following is a 486-amino-acid chain: Cardiolipin synthase A (486 aa).

Transmembrane regions (helical) follow at residues 3 to 23 (TFYT…IAGV) and 38 to 58 (MTWL…YFAF). 2 consecutive PLD phosphodiesterase domains span residues 219–246 (MDLR…VDPR) and 399–426 (EDGL…DMRS). Active-site residues include H224, K226, D231, H404, K406, and D411.

The protein belongs to the phospholipase D family. Cardiolipin synthase subfamily. ClsA sub-subfamily.

The protein resides in the cell inner membrane. The catalysed reaction is 2 a 1,2-diacyl-sn-glycero-3-phospho-(1'-sn-glycerol) = a cardiolipin + glycerol. Catalyzes the reversible phosphatidyl group transfer from one phosphatidylglycerol molecule to another to form cardiolipin (CL) (diphosphatidylglycerol) and glycerol. The sequence is that of Cardiolipin synthase A from Proteus mirabilis (strain HI4320).